Reading from the N-terminus, the 168-residue chain is Crossover junction endodeoxyribonuclease RuvC (168 aa).

Residues D8, E68, and D140 contribute to the active site. Mg(2+) contacts are provided by D8, E68, and D140.

Belongs to the RuvC family. In terms of assembly, homodimer which binds Holliday junction (HJ) DNA. The HJ becomes 2-fold symmetrical on binding to RuvC with unstacked arms; it has a different conformation from HJ DNA in complex with RuvA. In the full resolvosome a probable DNA-RuvA(4)-RuvB(12)-RuvC(2) complex forms which resolves the HJ. Requires Mg(2+) as cofactor.

The protein localises to the cytoplasm. It carries out the reaction Endonucleolytic cleavage at a junction such as a reciprocal single-stranded crossover between two homologous DNA duplexes (Holliday junction).. The RuvA-RuvB-RuvC complex processes Holliday junction (HJ) DNA during genetic recombination and DNA repair. Endonuclease that resolves HJ intermediates. Cleaves cruciform DNA by making single-stranded nicks across the HJ at symmetrical positions within the homologous arms, yielding a 5'-phosphate and a 3'-hydroxyl group; requires a central core of homology in the junction. The consensus cleavage sequence is 5'-(A/T)TT(C/G)-3'. Cleavage occurs on the 3'-side of the TT dinucleotide at the point of strand exchange. HJ branch migration catalyzed by RuvA-RuvB allows RuvC to scan DNA until it finds its consensus sequence, where it cleaves and resolves the cruciform DNA. The protein is Crossover junction endodeoxyribonuclease RuvC of Gluconobacter oxydans (strain 621H) (Gluconobacter suboxydans).